The sequence spans 306 residues: Agmatinase (306 aa).

Mn(2+)-binding residues include histidine 126, aspartate 149, histidine 151, aspartate 153, aspartate 230, and aspartate 232.

The protein belongs to the arginase family. Agmatinase subfamily. The cofactor is Mn(2+).

The enzyme catalyses agmatine + H2O = urea + putrescine. It participates in amine and polyamine biosynthesis; putrescine biosynthesis via agmatine pathway; putrescine from agmatine: step 1/1. Its function is as follows. Catalyzes the formation of putrescine from agmatine. This chain is Agmatinase, found in Cronobacter sakazakii (strain ATCC BAA-894) (Enterobacter sakazakii).